Reading from the N-terminus, the 754-residue chain is 5-methyltetrahydropteroyltriglutamate--homocysteine methyltransferase (754 aa).

Residues 17 to 20 (RELK) and Lys-117 contribute to the 5-methyltetrahydropteroyltri-L-glutamate site. L-homocysteine contacts are provided by residues 431 to 433 (IGS) and Glu-484. L-methionine-binding positions include 431–433 (IGS) and Glu-484. 5-methyltetrahydropteroyltri-L-glutamate is bound by residues 515 to 516 (RC) and Trp-561. Residue Asp-599 participates in L-homocysteine binding. Asp-599 serves as a coordination point for L-methionine. 5-methyltetrahydropteroyltri-L-glutamate is bound at residue Glu-605. His-641, Cys-643, and Glu-665 together coordinate Zn(2+). His-694 functions as the Proton donor in the catalytic mechanism. Cys-726 provides a ligand contact to Zn(2+).

Belongs to the vitamin-B12 independent methionine synthase family. It depends on Zn(2+) as a cofactor.

It carries out the reaction 5-methyltetrahydropteroyltri-L-glutamate + L-homocysteine = tetrahydropteroyltri-L-glutamate + L-methionine. The protein operates within amino-acid biosynthesis; L-methionine biosynthesis via de novo pathway; L-methionine from L-homocysteine (MetE route): step 1/1. In terms of biological role, catalyzes the transfer of a methyl group from 5-methyltetrahydrofolate to homocysteine resulting in methionine formation. The protein is 5-methyltetrahydropteroyltriglutamate--homocysteine methyltransferase of Salmonella paratyphi A (strain ATCC 9150 / SARB42).